The following is a 110-amino-acid chain: uncharacterized protein (110 aa).

The tract at residues 85 to 110 is disordered; the sequence is ARKAERPSQGGKDYNGTAKSAQSTTV. The span at 101-110 shows a compositional bias: polar residues; the sequence is TAKSAQSTTV.

This is an uncharacterized protein from Saccharomyces cerevisiae (strain ATCC 204508 / S288c) (Baker's yeast).